A 61-amino-acid chain; its full sequence is Toxin S5C1 (61 aa).

Cystine bridges form between Cys-3/Cys-22, Cys-16/Cys-39, Cys-41/Cys-53, and Cys-54/Cys-59. The Cell attachment site motif lies at 45-47 (RGD).

The protein belongs to the three-finger toxin family. Short-chain subfamily. Antiplatelet toxin sub-subfamily. Expressed by the venom gland.

It is found in the secreted. In terms of biological role, inhibits ADP-induced platelet aggregation and inhibits the binding of purified platelet fibrinogen receptor alpha-IIb/beta-3 (ITGA2B/ITGB3) to immobilized fibrinogen. The polypeptide is Toxin S5C1 (Dendroaspis jamesoni kaimosae (Eastern Jameson's mamba)).